We begin with the raw amino-acid sequence, 185 residues long: Elongation factor P (185 aa).

This sequence belongs to the elongation factor P family.

It localises to the cytoplasm. The protein operates within protein biosynthesis; polypeptide chain elongation. Functionally, involved in peptide bond synthesis. Stimulates efficient translation and peptide-bond synthesis on native or reconstituted 70S ribosomes in vitro. Probably functions indirectly by altering the affinity of the ribosome for aminoacyl-tRNA, thus increasing their reactivity as acceptors for peptidyl transferase. The chain is Elongation factor P from Herpetosiphon aurantiacus (strain ATCC 23779 / DSM 785 / 114-95).